We begin with the raw amino-acid sequence, 152 residues long: MVNEHKAHASFMFKIINVFVSFGFNLILGILIYDIFFNIDENLVVACILIAMPIIAFLILILTGGVHKELTYLQIYDKYKLMCEFIREITISTITSELATIATMILYQLQNPIKTITFLLLLIAFLAFGLIFTKLLIDAYFITLKKLKSLKE.

Helical transmembrane passes span 15 to 35, 43 to 63, and 117 to 137; these read IINVFVSFGFNLILGILIYDI, LVVACILIAMPIIAFLILILT, and TFLLLLIAFLAFGLIFTKLLI.

It to M.jannaschii MJ0129 and MJ0587.

The protein localises to the cell membrane. This is an uncharacterized protein from Methanocaldococcus jannaschii (strain ATCC 43067 / DSM 2661 / JAL-1 / JCM 10045 / NBRC 100440) (Methanococcus jannaschii).